We begin with the raw amino-acid sequence, 580 residues long: Keratin, type II cytoskeletal 5 (580 aa).

Residues 1–161 (MSRQSSVSFR…DPTIQRVRTE (161 aa)) are head. 4 positions are modified to phosphoserine: S5, S8, S16, and S21. Position 24 is a phosphothreonine; by CDK1 (T24). A phosphoserine mark is found at S26, S36, S47, S61, S68, S72, S75, and S79. Residue T145 is modified to Phosphothreonine; by CDK1. T160 carries the post-translational modification Phosphothreonine; by AURKB. The coil 1A stretch occupies residues 162–197 (EREQIKTLNNKFASFIDKVRFLEQQNKVLDTKWALL). Positions 162–475 (EREQIKTLNN…KLLEGEECRL (314 aa)) constitute an IF rod domain. The tract at residues 198-216 (QEQGTKTIKQNLDPLFEQY) is linker 1. The interval 217–309 (INNLRRQLDG…FFDAELSQMQ (93 aa)) is coil 1B. Positions 310-332 (THVSDTSVVLSMDNNRSLDLDSI) are linker 12. Residues 333–471 (IAEVKAQYED…ATYRKLLEGE (139 aa)) are coil 2. Residues 472–580 (ECRLSGEGVG…TSSSRRSFKS (109 aa)) form a tail region. R526 is subject to Omega-N-methylarginine. Residues 555 to 580 (FGSGGGSGSSVKFVSTTSSSRRSFKS) form a disordered region. A compositionally biased stretch (low complexity) spans 563–580 (SSVKFVSTTSSSRRSFKS).

It belongs to the intermediate filament family. As to quaternary structure, heterodimer of a type I and a type II keratin. Heterodimer with type I keratin KRT25 leading to the formation of keratin intermediate filament (KIF) network. Forms a heterodimer (via 2B domains) with KRT14 (via 2B domains). Interacts with PLEC isoform 1C, when in a heterodimer with KRT14. Interacts with TCHP. Interacts with EPPK1. Interacts with AMELX. Interacts with PKP1 (via N-terminus) and PKP2. In terms of processing, phosphorylated by CDK1, AURKB and Rho-kinase, phosphorylation is regulated by the cell cycle. Thr-24 phosphorylation, mediated by CDK1, peaks during prometaphase or metaphase cells with phosphorylated filamentous structures evident throughout the cytoplasm during early mitosis. CDK1 phosphorylates Thr-24 in mitotic cells at the site of injury. Post-translationally, O-glycosylated. In terms of tissue distribution, expressed in the corneal epithelium (at protein level). Expressed in the epidermis of the ear (at protein level). Expressed in the basal and spinous layers of the skin at birth (at protein level).

The protein resides in the cytoplasm. In terms of biological role, required for the formation of keratin intermediate filaments in the basal epidermis and maintenance of the skin barrier in response to mechanical stress. Regulates the recruitment of Langerhans cells to the epidermis, potentially by modulation of the abundance of macrophage chemotactic cytokines, macrophage inflammatory cytokines and CTNND1 localization in keratinocytes. In Mus musculus (Mouse), this protein is Keratin, type II cytoskeletal 5.